A 388-amino-acid polypeptide reads, in one-letter code: Succinate--CoA ligase [ADP-forming] subunit beta (388 aa).

In terms of domain architecture, ATP-grasp spans 9-244; sequence KQLFARYGMP…LSQEDERESR (236 aa). Residues K46, 53-55, E99, T102, and E107 contribute to the ATP site; that span reads GRG. Residues N199 and D213 each coordinate Mg(2+). Residues N264 and 321–323 contribute to the substrate site; that span reads GIV.

It belongs to the succinate/malate CoA ligase beta subunit family. As to quaternary structure, heterotetramer of two alpha and two beta subunits. Mg(2+) serves as cofactor.

The catalysed reaction is succinate + ATP + CoA = succinyl-CoA + ADP + phosphate. It catalyses the reaction GTP + succinate + CoA = succinyl-CoA + GDP + phosphate. The protein operates within carbohydrate metabolism; tricarboxylic acid cycle; succinate from succinyl-CoA (ligase route): step 1/1. Succinyl-CoA synthetase functions in the citric acid cycle (TCA), coupling the hydrolysis of succinyl-CoA to the synthesis of either ATP or GTP and thus represents the only step of substrate-level phosphorylation in the TCA. The beta subunit provides nucleotide specificity of the enzyme and binds the substrate succinate, while the binding sites for coenzyme A and phosphate are found in the alpha subunit. The polypeptide is Succinate--CoA ligase [ADP-forming] subunit beta (Serratia proteamaculans (strain 568)).